Here is a 314-residue protein sequence, read N- to C-terminus: 2,3-dihydroxyphenylpropionate/2,3-dihydroxicinnamic acid 1,2-dioxygenase (314 aa).

The active-site Proton donor is the histidine 115. Residue histidine 179 is the Proton acceptor of the active site.

It belongs to the LigB/MhpB extradiol dioxygenase family. In terms of assembly, homotetramer. Fe(2+) is required as a cofactor.

It catalyses the reaction 3-(2,3-dihydroxyphenyl)propanoate + O2 = (2Z,4E)-2-hydroxy-6-oxonona-2,4-dienedioate + H(+). The catalysed reaction is (2E)-3-(2,3-dihydroxyphenyl)prop-2-enoate + O2 = (2Z,4E,7E)-2-hydroxy-6-oxonona-2,4,7-trienedioate + H(+). Its pathway is aromatic compound metabolism; 3-phenylpropanoate degradation. Its function is as follows. Catalyzes the non-heme iron(II)-dependent oxidative cleavage of 2,3-dihydroxyphenylpropionic acid and 2,3-dihydroxicinnamic acid into 2-hydroxy-6-ketononadienedioate and 2-hydroxy-6-ketononatrienedioate, respectively. This Rhodococcus globerulus protein is 2,3-dihydroxyphenylpropionate/2,3-dihydroxicinnamic acid 1,2-dioxygenase.